The primary structure comprises 541 residues: tRNA uridine(34) acetyltransferase (541 aa).

Positions Lys76 to Glu336 are radical S-adenosyl-L-methionine (rSAM). Residues Arg79 to Lys350 form the Radical SAM core domain. 3 residues coordinate [4Fe-4S] cluster: Cys96, Cys101, and Cys104. Residues Lys156, Gln467–Val470, Tyr491–Arg493, and Tyr524 contribute to the acetyl-CoA site. In terms of domain architecture, N-acetyltransferase spans Val401–Glu541.

It belongs to the ELP3 family. [4Fe-4S] cluster serves as cofactor.

It carries out the reaction uridine(34) in tRNA + acetyl-CoA + S-adenosyl-L-methionine + H2O = 5-(carboxymethyl)uridine(34) in tRNA + 5'-deoxyadenosine + L-methionine + CoA + 2 H(+). It participates in tRNA modification. TRNA uridine(34) acetyltransferase, which mediates formation of carboxymethyluridine in the wobble base at position 34 in tRNAs. The proposed mechanism is the following: (i) recruits S-adenosyl-L-methionine and cleaves it to generate a 5'-deoxyadenosine radical (5'-dA) in the radical S-adenosyl-L-methionine (rSAM) region, (ii) hydrolyzes acetyl-CoA in the N-acetyltransferase domain and (iii) an acetyl radical is formed by the products of the two domains and (iv) is transferred onto the C5 position of uridine(34) in the bound tRNA molecule. Does not show protein lysine acetyltransferase activity. This is tRNA uridine(34) acetyltransferase from Methanocaldococcus jannaschii (strain ATCC 43067 / DSM 2661 / JAL-1 / JCM 10045 / NBRC 100440) (Methanococcus jannaschii).